The primary structure comprises 261 residues: tRNA pseudouridine synthase A (261 aa).

The active-site Nucleophile is aspartate 51. Tyrosine 109 is a substrate binding site.

The protein belongs to the tRNA pseudouridine synthase TruA family. Homodimer.

It catalyses the reaction uridine(38/39/40) in tRNA = pseudouridine(38/39/40) in tRNA. Functionally, formation of pseudouridine at positions 38, 39 and 40 in the anticodon stem and loop of transfer RNAs. The polypeptide is tRNA pseudouridine synthase A (Shewanella piezotolerans (strain WP3 / JCM 13877)).